The chain runs to 422 residues: Synaptotagmin-1 (422 aa).

Residues 1–57 are Vesicular-facing; the sequence is MVSESHHEALAAPPVTTVATVLPHNATEPASPGEGKEDAFSKLKEKFMNELHKIPLP. N-linked (GlcNAc...) asparagine glycosylation is present at Asn-25. The chain crosses the membrane as a helical span at residues 58-80; that stretch reads PWALIAIAIVAVLLVLTCCFCIC. 5 S-palmitoyl cysteine lipidation sites follow: Cys-75, Cys-76, Cys-78, Cys-80, and Cys-83. At 81 to 422 the chain is on the cytoplasmic side; that stretch reads KKCLFKKKNK…EVDAMLAVKK (342 aa). Residues 113-142 are disordered; sequence TMKDQALKDDDAETGLTDGEEKEEPKEEEK. Acidic residues predominate over residues 122 to 134; sequence DDAETGLTDGEEK. Thr-129 bears the Phosphothreonine mark. Residues 136-382 are phospholipid binding; it reads EPKEEEKLGK…AIGKVFVGYN (247 aa). One can recognise a C2 1 domain in the interval 142-261; it reads KLGKLQYSLD…DFGHVTEEWR (120 aa). Ca(2+) is bound by residues Leu-172, Asp-173, and Asp-179. Tyr-230 carries the phosphotyrosine modification. Residues Asp-231, Phe-232, Asp-233, Ser-236, Lys-237, and Asp-239 each coordinate Ca(2+). Ser-265 carries the post-translational modification Phosphoserine. The C2 2 domain occupies 273–406; that stretch reads KLGDICFSLR…NPRRPIAQWH (134 aa). The Ca(2+) site is built by Asp-304 and Asp-310. A phosphoserine mark is found at Ser-343 and Ser-345. Residues Asp-364, Asp-366, and Asp-372 each contribute to the Ca(2+) site.

It belongs to the synaptotagmin family. In terms of assembly, homotetramer. Heterodimer; heterodimerizes with SYT2 in presence of calcium. Interacts with SCAMP5. Interacts with STON2. Forms a complex with SV2B, syntaxin 1 and SNAP25. Interacts with SV2A, SV2B and SV2C. Interacts with RIMS1. Interacts with PRRT2. Interacts with DNAJC5 in a phosphorylation-dependent manner. Interacts (via N-terminus) with RAB3A. Interacts with SYT12. Interacts with calmodulin. Interacts with DNM1 (via C-terminal proline-rich domain (PRD)); this interaction facilitates vesicle fission during clathrin-mediated endocytosis (CME). Ca(2+) serves as cofactor. Post-translationally, glycosylated.

It is found in the cytoplasmic vesicle. The protein localises to the secretory vesicle membrane. It localises to the secretory vesicle. Its subcellular location is the synaptic vesicle membrane. The protein resides in the chromaffin granule membrane. It is found in the cytoplasm. Calcium sensor that participates in triggering neurotransmitter release at the synapse. May have a regulatory role in the membrane interactions during trafficking of synaptic vesicles at the active zone of the synapse. It binds acidic phospholipids with a specificity that requires the presence of both an acidic head group and a diacyl backbone. A Ca(2+)-dependent interaction between synaptotagmin and putative receptors for activated protein kinase C has also been reported. It can bind to at least three additional proteins in a Ca(2+)-independent manner; these are neurexins, syntaxin and AP2. Plays a role in dendrite formation by melanocytes. The chain is Synaptotagmin-1 from Bos taurus (Bovine).